Here is an 83-residue protein sequence, read N- to C-terminus: Small ribosomal subunit protein bS16 (83 aa).

This sequence belongs to the bacterial ribosomal protein bS16 family.

The protein is Small ribosomal subunit protein bS16 of Cupriavidus taiwanensis (strain DSM 17343 / BCRC 17206 / CCUG 44338 / CIP 107171 / LMG 19424 / R1) (Ralstonia taiwanensis (strain LMG 19424)).